Here is a 193-residue protein sequence, read N- to C-terminus: Biphenyl dioxygenase subunit beta (193 aa).

The protein belongs to the bacterial ring-hydroxylating dioxygenase beta subunit family. In terms of assembly, heterohexamer consisting of 3 BphA1 subunits and 3 BphA2 subunits. A ferredoxin (BphA3) and a ferredoxin reductase (BphA4) must be present to obtain activity.

The catalysed reaction is biphenyl + NADH + O2 + H(+) = (2R,3S)-3-phenylcyclohexa-3,5-diene-1,2-diol + NAD(+). It functions in the pathway xenobiotic degradation; biphenyl degradation; 2-hydroxy-2,4-pentadienoate and benzoate from biphenyl: step 1/4. Its function is as follows. The beta subunit may be responsible for the substrate specificity of the enzyme. The polypeptide is Biphenyl dioxygenase subunit beta (bphA2) (Pseudomonas sp. (strain KKS102)).